Here is a 31-residue protein sequence, read N- to C-terminus: Cytochrome b6-f complex subunit 6 (31 aa).

A helical membrane pass occupies residues 7-25; the sequence is YSGFLLAAPIPASAPFTGL.

The protein belongs to the PetL family. The 4 large subunits of the cytochrome b6-f complex are cytochrome b6, subunit IV (17 kDa polypeptide, PetD), cytochrome f and the Rieske protein, while the 4 small subunits are PetG, PetL, PetM and PetN. The complex functions as a dimer.

The protein localises to the plastid. Its subcellular location is the chloroplast thylakoid membrane. In terms of biological role, component of the cytochrome b6-f complex, which mediates electron transfer between photosystem II (PSII) and photosystem I (PSI), cyclic electron flow around PSI, and state transitions. PetL is important for photoautotrophic growth as well as for electron transfer efficiency and stability of the cytochrome b6-f complex. This chain is Cytochrome b6-f complex subunit 6, found in Huperzia lucidula (Shining clubmoss).